The chain runs to 481 residues: Cysteine--tRNA ligase (481 aa).

Zn(2+) is bound at residue cysteine 29. The 'HIGH' region motif lies at 31-41 (PTVYDYSHLGH). Positions 210, 235, and 239 each coordinate Zn(2+). The short motif at 272-276 (KMSKS) is the 'KMSKS' region element. Lysine 275 is an ATP binding site.

Belongs to the class-I aminoacyl-tRNA synthetase family. As to quaternary structure, monomer. It depends on Zn(2+) as a cofactor.

The protein resides in the cytoplasm. The enzyme catalyses tRNA(Cys) + L-cysteine + ATP = L-cysteinyl-tRNA(Cys) + AMP + diphosphate. This chain is Cysteine--tRNA ligase, found in Anaeromyxobacter dehalogenans (strain 2CP-1 / ATCC BAA-258).